Consider the following 373-residue polypeptide: MRWIEEELKRIKEANLYRERILLEGVKDFCSNDYLGLRKHPEVVEESIRVLKEAGLGSGASQLVSGYTKHHRELEEKLAEFKGTESCVLFGSGFLANVGTIPALVEEGDLVLSDELNHASIIDGVRLSKAQKRVFKHKDYEELEEFLKKNRKKFRRVLIITDTVFSMDGDVADLKRLTQICEEYDCMLYIDEAHTTGTIGKGGLDYFGIEHKEYIIVMGTLSKALGSYGAFVCGTKLLIDYLVNKARSLIFSTSLPPSVCAGAKKAIEIIEENPKLIEFLRKKEKEILEILEQFSLDYKYYSTPIIPIMVYDEKETVRIKEELLKEGVFIQAIRYPTVPKGKARLRLTASLNYTRKDLEFLKNALEKVLKGRA.

Arg18 is a substrate binding site. Residue 93–94 participates in pyridoxal 5'-phosphate binding; it reads GF. His118 is a binding site for substrate. Pyridoxal 5'-phosphate is bound by residues Ser166, 191-194, and 220-223; these read DEAH and TLSK. An N6-(pyridoxal phosphate)lysine modification is found at Lys223. Residue Thr337 coordinates substrate.

It belongs to the class-II pyridoxal-phosphate-dependent aminotransferase family. BioF subfamily. In terms of assembly, homodimer. Requires pyridoxal 5'-phosphate as cofactor.

It catalyses the reaction 6-carboxyhexanoyl-[ACP] + L-alanine + H(+) = (8S)-8-amino-7-oxononanoate + holo-[ACP] + CO2. It functions in the pathway cofactor biosynthesis; biotin biosynthesis. In terms of biological role, catalyzes the decarboxylative condensation of pimeloyl-[acyl-carrier protein] and L-alanine to produce 8-amino-7-oxononanoate (AON), [acyl-carrier protein], and carbon dioxide. In Aquifex aeolicus (strain VF5), this protein is Putative 8-amino-7-oxononanoate synthase (bioF).